The chain runs to 184 residues: Fruit protein pKIWI501 (184 aa).

Positions 1-184 (MATVEVTPAV…TEVPVDKTEE (184 aa)) are disordered. Low complexity-rich tracts occupy residues 25 to 36 (PQEPQPEAAVAA) and 53 to 65 (PEAV…PAAT). A compositionally biased stretch (acidic residues) spans 72–92 (EVAEAEEEVVEEPQEVPEEPV). Basic and acidic residues predominate over residues 96–119 (AAKEVEATEGKAEPTGEMKDKTPE). Low complexity predominate over residues 120–156 (ATDAPEAPAAAEEPTDAPEAPAVAEEPTNAPEAPAVG). A compositionally biased stretch (basic and acidic residues) spans 159–168 (PEAKEGKPDE).

This sequence to H.brasiliensis latex allergen Hev b 5.

This chain is Fruit protein pKIWI501, found in Actinidia deliciosa (Kiwi).